The following is a 348-amino-acid chain: GMP reductase 2 (348 aa).

NADP(+) is bound by residues 26 to 27 (SR), K78, 129 to 131 (DVA), and 180 to 181 (IG). 3 residues coordinate K(+): G181, G183, and C186. C186 functions as the Thioimidate intermediate in the catalytic mechanism. T188 serves as the catalytic Proton donor/acceptor. R189 contributes to the K(+) binding site. GMP-binding positions include 219 to 221 (DGG), 242 to 243 (GG), 268 to 270 (GMS), and 286 to 290 (RASEG). NADP(+)-binding positions include M269 and 285–286 (YR). K291 is modified (N6-acetyllysine). 314-317 (STCT) contacts NADP(+).

It belongs to the IMPDH/GMPR family. GuaC type 1 subfamily. In terms of assembly, homotetramer. As to expression, highly expressed in heart, skeletal muscle, kidney, brain, liver, prostate, spleen, placenta, testis and ovary. Low expression in colon, thymus and peripheral blood leukocytes.

The enzyme catalyses IMP + NH4(+) + NADP(+) = GMP + NADPH + 2 H(+). Its function is as follows. Catalyzes the irreversible NADPH-dependent deamination of GMP to IMP. It functions in the conversion of nucleobase, nucleoside and nucleotide derivatives of G to A nucleotides, and in maintaining the intracellular balance of A and G nucleotides. Plays a role in modulating cellular differentiation. In Homo sapiens (Human), this protein is GMP reductase 2.